A 299-amino-acid polypeptide reads, in one-letter code: Acetylglutamate kinase (299 aa).

Residues 64 to 65, arginine 86, and asparagine 197 contribute to the substrate site; that span reads GG.

This sequence belongs to the acetylglutamate kinase family. ArgB subfamily.

The protein localises to the cytoplasm. It carries out the reaction N-acetyl-L-glutamate + ATP = N-acetyl-L-glutamyl 5-phosphate + ADP. It participates in amino-acid biosynthesis; L-arginine biosynthesis; N(2)-acetyl-L-ornithine from L-glutamate: step 2/4. Catalyzes the ATP-dependent phosphorylation of N-acetyl-L-glutamate. This chain is Acetylglutamate kinase, found in Sulfurihydrogenibium sp. (strain YO3AOP1).